Here is an 887-residue protein sequence, read N- to C-terminus: Microsomal triglyceride transfer protein large subunit (887 aa).

Positions 1-11 (FLCFISSYSAS) are cleaved as a signal peptide. The Vitellogenin domain maps to 21-655 (LNNDRLYKLT…YIEKTPLHGI (635 aa)). Residues Cys-167 and Cys-187 are joined by a disulfide bond.

As to quaternary structure, heterodimer; heterodimerizes with the protein disulfide isomerase (P4HB/PDI). Interacts with APOB. Interacts with PRAP1.

Its subcellular location is the endoplasmic reticulum. The protein localises to the golgi apparatus. The enzyme catalyses a 1,2-diacyl-sn-glycero-3-phosphocholine(in) = a 1,2-diacyl-sn-glycero-3-phosphocholine(out). The catalysed reaction is a 1,2-diacyl-sn-glycero-3-phosphoethanolamine(in) = a 1,2-diacyl-sn-glycero-3-phosphoethanolamine(out). It carries out the reaction a cholesterol ester(in) = a cholesterol ester(out). It catalyses the reaction a triacyl-sn-glycerol(in) = a triacyl-sn-glycerol(out). Catalyzes the transport of triglyceride, cholesteryl ester, and phospholipid between phospholipid surfaces. Required for the assembly and secretion of plasma lipoproteins that contain apolipoprotein B. May be involved in regulating cholesteryl ester biosynthesis in cells that produce lipoproteins. In Bos taurus (Bovine), this protein is Microsomal triglyceride transfer protein large subunit (MTTP).